Here is a 368-residue protein sequence, read N- to C-terminus: Phosphoserine aminotransferase (368 aa).

Arg-44 is an L-glutamate binding site. Pyridoxal 5'-phosphate is bound by residues 78–79, Trp-104, Thr-157, Asp-179, and Gln-202; that span reads AT. At Lys-203 the chain carries N6-(pyridoxal phosphate)lysine. 244–245 is a binding site for pyridoxal 5'-phosphate; it reads NT.

The protein belongs to the class-V pyridoxal-phosphate-dependent aminotransferase family. SerC subfamily. As to quaternary structure, homodimer. Requires pyridoxal 5'-phosphate as cofactor.

Its subcellular location is the cytoplasm. The enzyme catalyses O-phospho-L-serine + 2-oxoglutarate = 3-phosphooxypyruvate + L-glutamate. It catalyses the reaction 4-(phosphooxy)-L-threonine + 2-oxoglutarate = (R)-3-hydroxy-2-oxo-4-phosphooxybutanoate + L-glutamate. The protein operates within amino-acid biosynthesis; L-serine biosynthesis; L-serine from 3-phospho-D-glycerate: step 2/3. It functions in the pathway cofactor biosynthesis; pyridoxine 5'-phosphate biosynthesis; pyridoxine 5'-phosphate from D-erythrose 4-phosphate: step 3/5. In terms of biological role, catalyzes the reversible conversion of 3-phosphohydroxypyruvate to phosphoserine and of 3-hydroxy-2-oxo-4-phosphonooxybutanoate to phosphohydroxythreonine. The polypeptide is Phosphoserine aminotransferase (Neisseria meningitidis serogroup B (strain ATCC BAA-335 / MC58)).